A 422-amino-acid polypeptide reads, in one-letter code: Histidine--tRNA ligase (422 aa).

Belongs to the class-II aminoacyl-tRNA synthetase family. As to quaternary structure, homodimer.

The protein resides in the cytoplasm. It carries out the reaction tRNA(His) + L-histidine + ATP = L-histidyl-tRNA(His) + AMP + diphosphate + H(+). This chain is Histidine--tRNA ligase, found in Nocardia farcinica (strain IFM 10152).